We begin with the raw amino-acid sequence, 235 residues long: tRNA (guanine-N(1)-)-methyltransferase (235 aa).

S-adenosyl-L-methionine-binding positions include G112 and 131–136; that span reads LGDFVL.

This sequence belongs to the RNA methyltransferase TrmD family. In terms of assembly, homodimer.

It localises to the cytoplasm. The enzyme catalyses guanosine(37) in tRNA + S-adenosyl-L-methionine = N(1)-methylguanosine(37) in tRNA + S-adenosyl-L-homocysteine + H(+). In terms of biological role, specifically methylates guanosine-37 in various tRNAs. The chain is tRNA (guanine-N(1)-)-methyltransferase from Synechococcus elongatus (strain ATCC 33912 / PCC 7942 / FACHB-805) (Anacystis nidulans R2).